The following is a 304-amino-acid chain: Ornithine carbamoyltransferase (304 aa).

Residues 47 to 50 (STRT), Arg98, and 125 to 128 (HPCQ) contribute to the carbamoyl phosphate site. L-ornithine-binding positions include Asn156, Asp221, and 225 to 226 (SM). Residues 262 to 263 (CL) and Arg290 contribute to the carbamoyl phosphate site.

This sequence belongs to the aspartate/ornithine carbamoyltransferase superfamily. OTCase family.

It localises to the cytoplasm. It carries out the reaction carbamoyl phosphate + L-ornithine = L-citrulline + phosphate + H(+). The protein operates within amino-acid biosynthesis; L-arginine biosynthesis; L-arginine from L-ornithine and carbamoyl phosphate: step 1/3. In terms of biological role, reversibly catalyzes the transfer of the carbamoyl group from carbamoyl phosphate (CP) to the N(epsilon) atom of ornithine (ORN) to produce L-citrulline. In Methanococcus aeolicus (strain ATCC BAA-1280 / DSM 17508 / OCM 812 / Nankai-3), this protein is Ornithine carbamoyltransferase.